The sequence spans 524 residues: Excitatory amino acid transporter 3 (524 aa).

Over 1 to 18 the chain is Cytoplasmic; that stretch reads MGKPARKGCDSKRFLKNN. The helical transmembrane segment at 19 to 38 threads the bilayer; sequence WLLLSTVVAVVLGIVIGVLV. The Extracellular portion of the chain corresponds to 39-61; the sequence is REYSNLSTLDKFYFAFPGEILMR. Asn43 is a glycosylation site (N-linked (GlcNAc...) asparagine). A helical membrane pass occupies residues 62–82; the sequence is MLKLVILPLIVSSMITGVAAL. Over 83 to 93 the chain is Cytoplasmic; it reads DSNVSGKIGLR. Residues 94-114 form a helical membrane-spanning segment; sequence AVLYYFCTTIIAVILGIVLVV. Residues Tyr98, Thr101, and Thr102 each contribute to the Na(+) site. Over 115 to 205 the chain is Extracellular; sequence SIKPGVTQKV…RTKEYRVVGL (91 aa). N-linked (GlcNAc...) asparagine glycosylation is found at Asn178 and Asn195. A helical membrane pass occupies residues 206–229; sequence YSDGINVLGLIVFCLVFGLVIGKM. Over 230–238 the chain is Cytoplasmic; that stretch reads GEKGQILVD. Residues 239–266 form a helical membrane-spanning segment; that stretch reads FFNALSDATMKIVQIIMCYMPLGILFLI. At 267–286 the chain is on the extracellular side; it reads AGKIIEVEDWEIFRKLGLYM. The chain crosses the membrane as a helical span at residues 287–308; sequence VTVLSGLAIHSIVILPLIYFIV. The Cytoplasmic segment spans residues 309–313; the sequence is VRKNP. Residues 314-344 constitute an intramembrane region (discontinuously helical); that stretch reads FRFAMGMTQALLTALMISSSSATLPVTFRCA. Ser331 and Ser333 together coordinate L-aspartate. Residues 345–353 are Cytoplasmic-facing; it reads EEKNRVDKR. A helical transmembrane segment spans residues 354–380; sequence ITRFVLPVGATINMDGTALYEAVAAVF. Na(+) contacts are provided by Gly362, Thr364, Asn366, and Asp368. An L-aspartate-binding site is contributed by Thr370. Residues 381 to 393 are Extracellular-facing; that stretch reads IAQLNDMDLSIGQ. Positions 394-427 form an intramembrane region, discontinuously helical; sequence IITISVTATAASIGAAGVPQAGLVTMVIVLSAVG. The Na(+) site is built by Ser405, Ile406, and Ala408. Position 411 (Val411) interacts with L-aspartate. Over 428 to 440 the chain is Extracellular; sequence LPAEDVTLIIAVD. A helical transmembrane segment spans residues 441-462; it reads WLLDRFRTVVNVLGDAFGTGIV. L-aspartate contacts are provided by Arg447, Thr448, and Asn451. Na(+) is bound by residues Asn451 and Asp455. Topologically, residues 463-524 are cytoplasmic; that stretch reads EKLSKKELEQ…TISFTQTSQF (62 aa). Phosphoserine occurs at positions 517 and 522.

It belongs to the dicarboxylate/amino acid:cation symporter (DAACS) (TC 2.A.23) family. SLC1A1 subfamily. As to quaternary structure, homotrimer. Interacts with ARL6IP5. Interacts with RTN2 (via N-terminus); the interaction promotes cell surface expression of SLC1A1. Interacts with SORCS2; this interaction is important for normal expression at the cell membrane. As to expression, brain, but also small intestine, kidney, liver and heart.

It localises to the cell membrane. It is found in the apical cell membrane. Its subcellular location is the synapse. The protein resides in the synaptosome. The protein localises to the early endosome membrane. It localises to the late endosome membrane. It is found in the recycling endosome membrane. It catalyses the reaction K(+)(in) + L-glutamate(out) + 3 Na(+)(out) + H(+)(out) = K(+)(out) + L-glutamate(in) + 3 Na(+)(in) + H(+)(in). The catalysed reaction is K(+)(in) + L-aspartate(out) + 3 Na(+)(out) + H(+)(out) = K(+)(out) + L-aspartate(in) + 3 Na(+)(in) + H(+)(in). The enzyme catalyses D-aspartate(out) + K(+)(in) + 3 Na(+)(out) + H(+)(out) = D-aspartate(in) + K(+)(out) + 3 Na(+)(in) + H(+)(in). It carries out the reaction K(+)(in) + L-cysteine(out) + 3 Na(+)(out) + H(+)(out) = K(+)(out) + L-cysteine(in) + 3 Na(+)(in) + H(+)(in). In terms of biological role, sodium-dependent, high-affinity amino acid transporter that mediates the uptake of L-glutamate and also L-aspartate and D-aspartate. Can also transport L-cysteine. Functions as a symporter that transports one amino acid molecule together with two or three Na(+) ions and one proton, in parallel with the counter-transport of one K(+) ion. Mediates Cl(-) flux that is not coupled to amino acid transport; this avoids the accumulation of negative charges due to aspartate and Na(+) symport. Plays an important role in L-glutamate and L-aspartate reabsorption in renal tubuli. Plays a redundant role in the rapid removal of released glutamate from the synaptic cleft, which is essential for terminating the postsynaptic action of glutamate. Contributes to glutathione biosynthesis and protection against oxidative stress via its role in L-glutamate and L-cysteine transport. Negatively regulated by ARL6IP5. The sequence is that of Excitatory amino acid transporter 3 (SLC1A1) from Oryctolagus cuniculus (Rabbit).